Consider the following 445-residue polypeptide: Neuropeptide Y receptor type 5 (445 aa).

At 1–42 the chain is on the extracellular side; it reads MEFKLEEHFNKTFVTENNTAAARNAAFPAWEDYRGSVDDLQY. 2 N-linked (GlcNAc...) asparagine glycosylation sites follow: Asn-10 and Asn-17. A helical transmembrane segment spans residues 43–63; that stretch reads FLIGLYTFVSLLGFMGNLLIL. Residues 64 to 77 are Cytoplasmic-facing; it reads MAVMKKRNQKTTVN. Residues 78-98 form a helical membrane-spanning segment; the sequence is FLIGNLAFSDILVVLFCSPFT. The Extracellular segment spans residues 99–117; it reads LTSVLLDQWMFGKAMCHIM. Cys-114 and Cys-198 are joined by a disulfide. The helical transmembrane segment at 118-138 threads the bilayer; it reads PFLQCVSVLVSTLILISIAIV. The Cytoplasmic segment spans residues 139–156; that stretch reads RYHMIKHPISNNLTANHG. Residues 157–177 form a helical membrane-spanning segment; the sequence is YFLIATVWTLGFAICSPLPVF. Residues 178 to 208 are Extracellular-facing; that stretch reads HSLVELKETFGSALLSSKYLCVESWPSDSYR. Residues 209 to 229 traverse the membrane as a helical segment; sequence IAFTISLLLVQYILPLVCLTV. The Cytoplasmic portion of the chain corresponds to 230–368; sequence SHTSVCRSIS…KKRSRSVFYR (139 aa). A helical membrane pass occupies residues 369 to 389; the sequence is LTILILVFAVSWMPLHVFHVV. Residues 390-406 are Extracellular-facing; it reads TDFNDNLISNRHFKLVY. Residues 407–427 form a helical membrane-spanning segment; it reads CICHLLGMMSCCLNPILYGFL. The Cytoplasmic segment spans residues 428–445; that stretch reads NNGIKADLRALIHCLHMS. Residue Cys-441 is the site of S-palmitoyl cysteine attachment.

It belongs to the G-protein coupled receptor 1 family. Brain; hypothalamus.

The protein resides in the cell membrane. In terms of biological role, receptor for neuropeptide Y and peptide YY. The activity of this receptor is mediated by G proteins that inhibit adenylate cyclase activity. Seems to be associated with food intake. Could be involved in feeding disorders. The sequence is that of Neuropeptide Y receptor type 5 (Npy5r) from Rattus norvegicus (Rat).